A 445-amino-acid chain; its full sequence is tRNA modification GTPase MnmE (445 aa).

(6S)-5-formyl-5,6,7,8-tetrahydrofolate-binding residues include Arg24, Glu81, and Lys121. A TrmE-type G domain is found at 218–369; that stretch reads GLTVVIAGPP…LLEALVGFAR (152 aa). GTP-binding positions include 228 to 233, 247 to 253, 272 to 275, and 350 to 352; these read NAGKST, SPHAGTT, DTAG, and SAR. Ser232 and Thr253 together coordinate Mg(2+). Residue Lys445 coordinates (6S)-5-formyl-5,6,7,8-tetrahydrofolate.

This sequence belongs to the TRAFAC class TrmE-Era-EngA-EngB-Septin-like GTPase superfamily. TrmE GTPase family. Homodimer. Heterotetramer of two MnmE and two MnmG subunits. K(+) is required as a cofactor.

The protein localises to the cytoplasm. Functionally, exhibits a very high intrinsic GTPase hydrolysis rate. Involved in the addition of a carboxymethylaminomethyl (cmnm) group at the wobble position (U34) of certain tRNAs, forming tRNA-cmnm(5)s(2)U34. In Bradyrhizobium sp. (strain BTAi1 / ATCC BAA-1182), this protein is tRNA modification GTPase MnmE.